A 251-amino-acid chain; its full sequence is 3-deoxy-manno-octulosonate cytidylyltransferase (251 aa).

This sequence belongs to the KdsB family.

It localises to the cytoplasm. It catalyses the reaction 3-deoxy-alpha-D-manno-oct-2-ulosonate + CTP = CMP-3-deoxy-beta-D-manno-octulosonate + diphosphate. It functions in the pathway nucleotide-sugar biosynthesis; CMP-3-deoxy-D-manno-octulosonate biosynthesis; CMP-3-deoxy-D-manno-octulosonate from 3-deoxy-D-manno-octulosonate and CTP: step 1/1. Its pathway is bacterial outer membrane biogenesis; lipopolysaccharide biosynthesis. Its function is as follows. Activates KDO (a required 8-carbon sugar) for incorporation into bacterial lipopolysaccharide in Gram-negative bacteria. The sequence is that of 3-deoxy-manno-octulosonate cytidylyltransferase from Brucella abortus (strain 2308).